A 1171-amino-acid polypeptide reads, in one-letter code: ATP-dependent helicase/deoxyribonuclease subunit B (1171 aa).

The region spanning methionine 1 to alanine 390 is the UvrD-like helicase ATP-binding domain. ATP is bound at residue glycine 8–serine 15. A UvrD-like helicase C-terminal domain is found at methionine 281–aspartate 587. The [4Fe-4S] cluster site is built by cysteine 805, cysteine 1129, cysteine 1132, and cysteine 1138.

This sequence belongs to the helicase family. AddB/RexB type 1 subfamily. As to quaternary structure, heterodimer of AddA and AddB. Mg(2+) is required as a cofactor. [4Fe-4S] cluster serves as cofactor.

Functionally, the heterodimer acts as both an ATP-dependent DNA helicase and an ATP-dependent, dual-direction single-stranded exonuclease. Recognizes the chi site generating a DNA molecule suitable for the initiation of homologous recombination. The AddB subunit has 5' -&gt; 3' nuclease activity but not helicase activity. This Bacillus cereus (strain ZK / E33L) protein is ATP-dependent helicase/deoxyribonuclease subunit B.